The chain runs to 197 residues: ATP-dependent Clp protease proteolytic subunit 1 (197 aa).

Serine 96 serves as the catalytic Nucleophile. Residue histidine 121 is part of the active site.

It belongs to the peptidase S14 family. As to quaternary structure, fourteen ClpP subunits assemble into 2 heptameric rings which stack back to back to give a disk-like structure with a central cavity, resembling the structure of eukaryotic proteasomes.

It localises to the cytoplasm. It carries out the reaction Hydrolysis of proteins to small peptides in the presence of ATP and magnesium. alpha-casein is the usual test substrate. In the absence of ATP, only oligopeptides shorter than five residues are hydrolyzed (such as succinyl-Leu-Tyr-|-NHMec, and Leu-Tyr-Leu-|-Tyr-Trp, in which cleavage of the -Tyr-|-Leu- and -Tyr-|-Trp bonds also occurs).. Functionally, cleaves peptides in various proteins in a process that requires ATP hydrolysis. Has a chymotrypsin-like activity. Plays a major role in the degradation of misfolded proteins. The chain is ATP-dependent Clp protease proteolytic subunit 1 from Synechococcus sp. (strain CC9902).